Consider the following 796-residue polypeptide: Kinesin-like protein KIF3C (796 aa).

The region spanning 10 to 367 is the Kinesin motor domain; the sequence is ALKVVARCRP…LRFANRAKNI (358 aa). 97–104 is an ATP binding site; that stretch reads GQTGTGKT. Disordered regions lie at residues 252-292, 397-422, and 758-796; these read RQNK…PKEA, EKKG…APAG, and KVRK…VDHD. The segment covering 256–269 has biased composition (low complexity); sequence AGPNAAGGPATQPT. Positions 378-632 form a coiled coil; sequence KDTLLREFQE…NEQTRELKLK (255 aa). Residues 401 to 416 show a composition bias toward basic residues; the sequence is MLGKRPRRKSSRRKKA. The segment at 633 to 793 is globular; the sequence is YLIIENFIPP…SVPLHPATVV (161 aa).

Belongs to the TRAFAC class myosin-kinesin ATPase superfamily. Kinesin family. Kinesin II subfamily. Heterodimer of KIF3A and KIF3C.

It is found in the cytoplasm. The protein resides in the cytoskeleton. Functionally, microtubule-based anterograde translocator for membranous organelles. The sequence is that of Kinesin-like protein KIF3C (Kif3c) from Mus musculus (Mouse).